A 130-amino-acid polypeptide reads, in one-letter code: T-cell receptor beta chain V region A20.2.25 (130 aa).

A signal peptide spans 1–21 (MSCRLLLYVSLCLVETALMNT). The v segment stretch occupies residues 22-112 (KITQSPRYLI…DSAVYFCASS (91 aa)). 2 N-linked (GlcNAc...) asparagine glycosylation sites follow: Asn36 and Asn75. The segment at 113–115 (HGE) is d segment. Residues 116-130 (NTEVFFGKGTTLTVV) form a j segment region.

This chain is T-cell receptor beta chain V region A20.2.25, found in Mus musculus (Mouse).